Reading from the N-terminus, the 720-residue chain is ATP-dependent DNA helicase Hel308 (720 aa).

ATP-binding positions include Ser-23, Gln-28, and 46–53 (IPTASGKT). In terms of domain architecture, Helicase ATP-binding spans 33–197 (KSGILEGKNA…WLNAELIVSD (165 aa)). The short motif at 145-148 (DEIH) is the DEAH box element. The 194-residue stretch at 229–422 (LVYDAIRKKK…NLRSQVLALI (194 aa)) folds into the Helicase C-terminal domain.

This sequence belongs to the helicase family. Hel308 subfamily. As to quaternary structure, monomer. Interacts with PCNA. Mg(2+) is required as a cofactor. The cofactor is Zn(2+).

It carries out the reaction Couples ATP hydrolysis with the unwinding of duplex DNA by translocating in the 3'-5' direction.. The enzyme catalyses ATP + H2O = ADP + phosphate + H(+). DNA-dependent ATPase and 3'-5' DNA helicase that may be involved in repair of stalled replication forks. Unwinds the lagging strand from forked DNA structures in a 3'-5' direction. PCNA, the DNA polymerase sliding clamp subunit, stimulates the helicase activity, and may alter substrate specificity. Unwinds branched DNA (Holliday junctions) in an ATP-dependent fashion; ss- and dsDNA stimulate ATPase to the greatest extent, although it preferentially binds DNA with a single-stranded region. Processes a RecA-mediated recombination intermediate between gapped circular and homologous linear dsDNA. The protein is ATP-dependent DNA helicase Hel308 of Pyrococcus furiosus (strain ATCC 43587 / DSM 3638 / JCM 8422 / Vc1).